A 211-amino-acid polypeptide reads, in one-letter code: Peptidyl-tRNA hydrolase (211 aa).

Tyrosine 17 lines the tRNA pocket. The active-site Proton acceptor is histidine 22. Residues phenylalanine 79, asparagine 81, and asparagine 127 each contribute to the tRNA site.

It belongs to the PTH family. Monomer.

The protein resides in the cytoplasm. It carries out the reaction an N-acyl-L-alpha-aminoacyl-tRNA + H2O = an N-acyl-L-amino acid + a tRNA + H(+). Hydrolyzes ribosome-free peptidyl-tRNAs (with 1 or more amino acids incorporated), which drop off the ribosome during protein synthesis, or as a result of ribosome stalling. In terms of biological role, catalyzes the release of premature peptidyl moieties from peptidyl-tRNA molecules trapped in stalled 50S ribosomal subunits, and thus maintains levels of free tRNAs and 50S ribosomes. This chain is Peptidyl-tRNA hydrolase, found in Solidesulfovibrio magneticus (strain ATCC 700980 / DSM 13731 / RS-1) (Desulfovibrio magneticus).